A 379-amino-acid polypeptide reads, in one-letter code: DnaJ homolog subfamily B member 14 (379 aa).

The Cytoplasmic segment spans residues 1 to 244; the sequence is MEGNRDEAEK…GHEREEERAD (244 aa). Residues 56–90 form a disordered region; that stretch reads TAGSSTHCRKPPGSSDQSKPSCGKDGTSGAGEGGK. The 65-residue stretch at 108 to 172 folds into the J domain; it reads NYYEVLGVTK…EKRKQYDLTG (65 aa). The chain crosses the membrane as a helical span at residues 245 to 265; sequence GGFSVFIQLMPIIVLILVSLL. Residues 266–379 lie on the Lumenal side of the membrane; the sequence is SQLMVSNPPY…ERLTSLYKGG (114 aa).

It belongs to the DnaJ family. DNAJB12/DNAJB14 subfamily. As to quaternary structure, interacts (via J domain) with HSPA8/Hsc70. Forms a multiprotein complex, at least composed of DNAJB12, DNAJB14, HSPA8/Hsc70 and SGTA; interaction with DNAJB14 and HSPA8/Hsc70 is direct.

The protein localises to the endoplasmic reticulum membrane. Its subcellular location is the nucleus membrane. Functionally, acts as a co-chaperone with HSPA8/Hsc70; required to promote protein folding and trafficking, prevent aggregation of client proteins, and promote unfolded proteins to endoplasmic reticulum-associated degradation (ERAD) pathway. Acts by determining HSPA8/Hsc70's ATPase and polypeptide-binding activities. Can also act independently of HSPA8/Hsc70: together with DNAJB12, acts as a chaperone that promotes maturation of potassium channels KCND2 and KCNH2 by stabilizing nascent channel subunits and assembling them into tetramers. While stabilization of nascent channel proteins is dependent on HSPA8/Hsc70, the process of oligomerization of channel subunits is independent of HSPA8/Hsc70. When overexpressed, forms membranous structures together with DNAJB12 and HSPA8/Hsc70 within the nucleus; the role of these structures, named DJANGOs, is still unclear. The polypeptide is DnaJ homolog subfamily B member 14 (Mus musculus (Mouse)).